A 557-amino-acid chain; its full sequence is NAD(P)H-quinone oxidoreductase chain 4 (557 aa).

14 helical membrane passes run 25 to 45, 57 to 77, 111 to 131, 133 to 153, 157 to 177, 189 to 209, 230 to 250, 264 to 284, 298 to 318, 327 to 347, 353 to 373, 397 to 417, 438 to 458, and 485 to 505; these read FPWLSLSILFPIAGSLLVPFI, YALFIALTTFLITVGAYLKGF, LILLTSFITALAVLAAWPVSF, PKLFFFLILAMDGGQIAVFAV, LLFFLAWELELLPVYLLLAIW, FIIYTAGSSLFILLAGLAMGF, GFQLLCYGGLLIAFGVKLPIV, TAPVHMLLAGILLKMGGYALL, FAPLLIVLGVVNIIYAALTSF, IAYSSISHMGFVLIGIGSFST, AMLQMISHGLIGASLFFLVGA, FALWTVCSLASLALPGMSGFV, IVIAGLAAIGVILTPIYLLSM, and IYIIGSLLVPIIGIGLYPRIM.

This sequence belongs to the complex I subunit 4 family.

It localises to the cellular thylakoid membrane. The enzyme catalyses a plastoquinone + NADH + (n+1) H(+)(in) = a plastoquinol + NAD(+) + n H(+)(out). It catalyses the reaction a plastoquinone + NADPH + (n+1) H(+)(in) = a plastoquinol + NADP(+) + n H(+)(out). In terms of biological role, NDH-1 shuttles electrons from NAD(P)H, via FMN and iron-sulfur (Fe-S) centers, to quinones in the respiratory chain. The immediate electron acceptor for the enzyme in this species is believed to be plastoquinone. Couples the redox reaction to proton translocation (for every two electrons transferred, four hydrogen ions are translocated across the cytoplasmic membrane), and thus conserves the redox energy in a proton gradient. The chain is NAD(P)H-quinone oxidoreductase chain 4 from Prochlorococcus marinus (strain SARG / CCMP1375 / SS120).